We begin with the raw amino-acid sequence, 698 residues long: Polyphosphate kinase (698 aa).

N63 contributes to the ATP binding site. Mg(2+) is bound by residues R390 and R420. H450 serves as the catalytic Phosphohistidine intermediate. Residues Y483, R579, and H607 each contribute to the ATP site.

The protein belongs to the polyphosphate kinase 1 (PPK1) family. Requires Mg(2+) as cofactor. An intermediate of this reaction is the autophosphorylated ppk in which a phosphate is covalently linked to a histidine residue through a N-P bond.

It catalyses the reaction [phosphate](n) + ATP = [phosphate](n+1) + ADP. Functionally, catalyzes the reversible transfer of the terminal phosphate of ATP to form a long-chain polyphosphate (polyP). In Xylella fastidiosa (strain 9a5c), this protein is Polyphosphate kinase.